A 270-amino-acid chain; its full sequence is 4-hydroxy-tetrahydrodipicolinate reductase (270 aa).

Residues 11–16 (GCQGRM) and glutamate 37 contribute to the NAD(+) site. Arginine 38 provides a ligand contact to NADP(+). NAD(+) is bound by residues 101–103 (GTT) and 125–128 (ASNF). The active-site Proton donor/acceptor is the histidine 158. Residue histidine 159 participates in (S)-2,3,4,5-tetrahydrodipicolinate binding. The Proton donor role is filled by lysine 162. 168–169 (GT) is a (S)-2,3,4,5-tetrahydrodipicolinate binding site.

Belongs to the DapB family.

It localises to the cytoplasm. It catalyses the reaction (S)-2,3,4,5-tetrahydrodipicolinate + NAD(+) + H2O = (2S,4S)-4-hydroxy-2,3,4,5-tetrahydrodipicolinate + NADH + H(+). It carries out the reaction (S)-2,3,4,5-tetrahydrodipicolinate + NADP(+) + H2O = (2S,4S)-4-hydroxy-2,3,4,5-tetrahydrodipicolinate + NADPH + H(+). It participates in amino-acid biosynthesis; L-lysine biosynthesis via DAP pathway; (S)-tetrahydrodipicolinate from L-aspartate: step 4/4. Its function is as follows. Catalyzes the conversion of 4-hydroxy-tetrahydrodipicolinate (HTPA) to tetrahydrodipicolinate. The protein is 4-hydroxy-tetrahydrodipicolinate reductase of Tolumonas auensis (strain DSM 9187 / NBRC 110442 / TA 4).